We begin with the raw amino-acid sequence, 68 residues long: Non-disulfide-bridged peptide 5.6 (68 aa).

An N-terminal signal peptide occupies residues 1–23; that stretch reads MKTQVIIFIMAVVFLQLLSQSEA. Residues 37–68 constitute a propeptide that is removed on maturation; it reads ELRNIDLDQFDDMFDEPEISAADMRFLQELLK.

It belongs to the non-disulfide-bridged peptide (NDBP) superfamily. Short antimicrobial peptide (group 4) family. As to expression, expressed by the venom gland.

The protein resides in the secreted. Its subcellular location is the target cell membrane. Antibacterial peptide with activity against both Gram-positive and Gram-negative bacteria probably by forming pores in the cell membrane. Also has weak hemolytic activity. Does not show antifungal activity. In Hoffmannihadrurus gertschi (Scorpion), this protein is Non-disulfide-bridged peptide 5.6.